The primary structure comprises 201 residues: Reticulon-like protein B10 (201 aa).

The Reticulon domain maps to 14–201 (VADLIMWKNR…KPTNKIKKMQ (188 aa)). The next 3 membrane-spanning stretches (helical) occupy residues 25-45 (GGFLLLGSTTLLWFLFEKCGY), 46-66 (SFFPFVVNTQLLSVVILFLWA), and 135-155 (FLNFLTILYLGVVLSLLIPFL).

It is found in the endoplasmic reticulum membrane. The chain is Reticulon-like protein B10 (RTNLB10) from Arabidopsis thaliana (Mouse-ear cress).